A 460-amino-acid polypeptide reads, in one-letter code: Elongation factor 1-alpha (460 aa).

A N,N,N-trimethylglycine modification is found at G2. K3 is subject to N6,N6-dimethyllysine; alternate. Residue K3 is modified to N6-methyllysine; alternate. The 236-residue stretch at K6–T241 folds into the tr-type G domain. The segment at G15–S22 is G1. G15–S22 serves as a coordination point for GTP. K31 is subject to N6-methyllysine. The segment at G71–D75 is G2. K80 is modified (N6,N6,N6-trimethyllysine). A G3 region spans residues D92 to G95. Residues D92–H96 and N154–D157 each bind GTP. Positions N154–D157 are G4. The interval S193 to F195 is G5. Position 317 is an N6,N6-dimethyllysine; alternate (K317). K317 bears the N6-methyllysine; alternate mark. K391 carries the N6-methyllysine modification.

This sequence belongs to the TRAFAC class translation factor GTPase superfamily. Classic translation factor GTPase family. EF-Tu/EF-1A subfamily.

Its subcellular location is the cytoplasm. Its function is as follows. This protein promotes the GTP-dependent binding of aminoacyl-tRNA to the A-site of ribosomes during protein biosynthesis. The chain is Elongation factor 1-alpha (tef1) from Aspergillus oryzae (strain ATCC 42149 / RIB 40) (Yellow koji mold).